The following is a 73-amino-acid chain: UPF0154 protein LGAS_0795 (73 aa).

Residues 3–23 (LGLAIFLIIIALLIGLVGGFY) form a helical membrane-spanning segment.

Belongs to the UPF0154 family.

It localises to the cell membrane. This is UPF0154 protein LGAS_0795 from Lactobacillus gasseri (strain ATCC 33323 / DSM 20243 / BCRC 14619 / CIP 102991 / JCM 1131 / KCTC 3163 / NCIMB 11718 / NCTC 13722 / AM63).